A 244-amino-acid chain; its full sequence is Flavin-dependent thymidylate synthase (244 aa).

The ThyX domain occupies 2–207 (VRVTLVNYTK…DIRPIIKWAK (206 aa)). FAD-binding positions include Ser-56, 80–82 (RHR), and Gln-88. Residues 77–80 (QLVR), 88–92 (QQSQR), and Arg-146 contribute to the dUMP site. The ThyX motif motif lies at 80–90 (RHRIASYTQQS). Residues 162-164 (NLR) and His-168 contribute to the FAD site. Residue Arg-173 participates in dUMP binding. The active-site Involved in ionization of N3 of dUMP, leading to its activation is Arg-173.

The protein belongs to the thymidylate synthase ThyX family. Homotetramer. Requires FAD as cofactor.

It catalyses the reaction dUMP + (6R)-5,10-methylene-5,6,7,8-tetrahydrofolate + NADPH + H(+) = dTMP + (6S)-5,6,7,8-tetrahydrofolate + NADP(+). It participates in pyrimidine metabolism; dTTP biosynthesis. Its function is as follows. Catalyzes the reductive methylation of 2'-deoxyuridine-5'-monophosphate (dUMP) to 2'-deoxythymidine-5'-monophosphate (dTMP) while utilizing 5,10-methylenetetrahydrofolate (mTHF) as the methyl donor, and NADPH and FADH(2) as the reductant. In Pyrococcus furiosus (strain ATCC 43587 / DSM 3638 / JCM 8422 / Vc1), this protein is Flavin-dependent thymidylate synthase.